The chain runs to 200 residues: Small ribosomal subunit protein eS8A (200 aa).

Residues 1–31 are disordered; the sequence is MGISRDSRHKRSATGAKRAQFRKKRKFELGR. Residue Thr62 is modified to Phosphothreonine. Phosphoserine occurs at positions 66, 69, 73, and 86. Thr107 is modified (phosphothreonine). Ser154, Ser155, Ser158, and Ser161 each carry phosphoserine.

It belongs to the eukaryotic ribosomal protein eS8 family. As to quaternary structure, component of the small ribosomal subunit (SSU). Mature yeast ribosomes consist of a small (40S) and a large (60S) subunit. The 40S small subunit contains 1 molecule of ribosomal RNA (18S rRNA) and 33 different proteins (encoded by 57 genes). The large 60S subunit contains 3 rRNA molecules (25S, 5.8S and 5S rRNA) and 46 different proteins (encoded by 81 genes).

The protein localises to the cytoplasm. Its function is as follows. Component of the ribosome, a large ribonucleoprotein complex responsible for the synthesis of proteins in the cell. The small ribosomal subunit (SSU) binds messenger RNAs (mRNAs) and translates the encoded message by selecting cognate aminoacyl-transfer RNA (tRNA) molecules. The large subunit (LSU) contains the ribosomal catalytic site termed the peptidyl transferase center (PTC), which catalyzes the formation of peptide bonds, thereby polymerizing the amino acids delivered by tRNAs into a polypeptide chain. The nascent polypeptides leave the ribosome through a tunnel in the LSU and interact with protein factors that function in enzymatic processing, targeting, and the membrane insertion of nascent chains at the exit of the ribosomal tunnel. The chain is Small ribosomal subunit protein eS8A from Saccharomyces cerevisiae (strain ATCC 204508 / S288c) (Baker's yeast).